The primary structure comprises 559 residues: DNA ligase (559 aa).

Residue glutamate 247 coordinates ATP. Lysine 249 serves as the catalytic N6-AMP-lysine intermediate. Arginine 254, arginine 269, glutamate 299, phenylalanine 339, arginine 414, and lysine 420 together coordinate ATP.

This sequence belongs to the ATP-dependent DNA ligase family. It depends on Mg(2+) as a cofactor.

It catalyses the reaction ATP + (deoxyribonucleotide)n-3'-hydroxyl + 5'-phospho-(deoxyribonucleotide)m = (deoxyribonucleotide)n+m + AMP + diphosphate.. DNA ligase that seals nicks in double-stranded DNA during DNA replication, DNA recombination and DNA repair. This is DNA ligase from Pyrococcus abyssi (strain GE5 / Orsay).